A 168-amino-acid polypeptide reads, in one-letter code: Protein OPG162 (168 aa).

The Intravirion segment spans residues 1–14 (MKSLNRQTVSRFKK). A helical transmembrane segment spans residues 15-37 (LSVPAAIMMILSTIISGIGTFLH). Residues 38-168 (YKEELMPSAC…SVLCVKRFYK (131 aa)) are Virion surface-facing. The C-type lectin domain occupies 54-163 (YDKHCYLDTN…CKSTQSVLCV (110 aa)). 2 cysteine pairs are disulfide-bonded: cysteine 75–cysteine 162 and cysteine 141–cysteine 154. An N-linked (GlcNAc...) asparagine; by host glycan is attached at asparagine 133.

Belongs to the orthopoxvirus OPG162 protein family. In terms of assembly, interacts with protein OPG161. Interacts with protein OPG164. Interacts with protein OPG190.

The protein localises to the virion membrane. It localises to the host Golgi apparatus. Functionally, forms a complex with OPG162 and OPG190 to coordinate the incorporation of OPG164 into wrapped enveloped virion (EV) membranes and, subsequently, the production of actin tails. Therefore plays an essential role in efficient cell-to-cell spread of viral particles. The polypeptide is Protein OPG162 (OPG162) (Variola virus (isolate Human/India/Ind3/1967) (VARV)).